A 218-amino-acid chain; its full sequence is MRLILLGAPGAGKGTQAGFICQRYGIPQISTGDMLRAAVKAGTPLGLQAKAVMDSGSLVSDDIIIHLVKERIAQPDCAQGFLFDGFPRTIAQADALKAAGVRLDYVLEIDVPFEAIIERMSGRRSHPASGRTYHVRFNPPKIDGKDDLTGEALLQREDDKEETVRKRLQVYSAQTRPLVDYYSHWARVEPAAAPRYRCISGTGRVDEITARALQALAC.

Position 10 to 15 (G10 to T15) interacts with ATP. An NMP region spans residues S30–V59. Residues T31, R36, S57–V59, G85–R88, and Q92 each bind AMP. The segment at G122 to D159 is LID. ATP-binding positions include R123 and T132–Y133. AMP-binding residues include R156 and R167. G203 contacts ATP.

This sequence belongs to the adenylate kinase family. In terms of assembly, monomer.

It localises to the cytoplasm. The enzyme catalyses AMP + ATP = 2 ADP. The protein operates within purine metabolism; AMP biosynthesis via salvage pathway; AMP from ADP: step 1/1. In terms of biological role, catalyzes the reversible transfer of the terminal phosphate group between ATP and AMP. Plays an important role in cellular energy homeostasis and in adenine nucleotide metabolism. This chain is Adenylate kinase, found in Verminephrobacter eiseniae (strain EF01-2).